Here is a 153-residue protein sequence, read N- to C-terminus: Arginine regulator (153 aa).

Belongs to the ArgR family.

It is found in the cytoplasm. It functions in the pathway amino-acid degradation; L-arginine degradation via ADI pathway. Functionally, regulates the transcription of the arc operon, involved in arginine catabolism. This is Arginine regulator (argR1) from Lactiplantibacillus plantarum (strain ATCC BAA-793 / NCIMB 8826 / WCFS1) (Lactobacillus plantarum).